The following is a 1354-amino-acid chain: Enhancer of mRNA-decapping protein 4 homolog (1354 aa).

The tract at residues 18 to 38 (PLSASSSPPPSVHRSPRCGKA) is disordered. The residue at position 32 (Ser32) is a Phosphoserine. 2 WD repeats span residues 309–348 (EEDS…VRNH) and 363–406 (CSLF…CLQT). The disordered stretch occupies residues 552–581 (ERSSLNSKRSQTPEDNLLIKEEPESPNSGT). Residues 554 to 565 (SSLNSKRSQTPE) are compositionally biased toward polar residues. Residue Ser561 is modified to Phosphoserine. Thr563 carries the post-translational modification Phosphothreonine. Phosphoserine is present on Ser576. The residue at position 581 (Thr581) is a Phosphothreonine. Residues Ser759, Ser762, and Ser763 each carry the phosphoserine modification. Residues 765-803 (SREVQEIMATQDDADAYEAELENLDDDDDDEEEELANSS) are a coiled coil. Acidic residues predominate over residues 788–799 (LDDDDDDEEEEL). Disordered regions lie at residues 788-811 (LDDD…AVDG) and 838-884 (NTNN…AGGT). The segment covering 853 to 884 (NNNTSVGSNSNNNTATTLSTSNTSSSNNAGGT) has biased composition (low complexity). Coiled coils occupy residues 893–936 (ELNA…HSKQ), 969–1036 (NEHK…QAQM), and 1159–1188 (KHRT…QVQE). A Phosphoserine modification is found at Ser1207. Phosphothreonine is present on residues Thr1211 and Thr1317. Position 1320 is a phosphotyrosine (Tyr1320).

It belongs to the WD repeat EDC4 family. As to quaternary structure, homodimer. Interacts with Dcp1 and Dcp2. Interacts with Gyf.

Its subcellular location is the cytoplasm. The protein resides in the P-body. In the process of mRNA degradation, seems to play a role in mRNA decapping. Required for silencing a subset of endogenous miRNA targets. In Drosophila melanogaster (Fruit fly), this protein is Enhancer of mRNA-decapping protein 4 homolog (Ge-1).